Consider the following 206-residue polypeptide: Probable 5-formyltetrahydrofolate cyclo-ligase (206 aa).

ATP-binding positions include 8–12 (KSELR) and arginine 12. Substrate contacts are provided by residues valine 54, glutamate 59, and 146-150 (HGKGY). 143–151 (RCGHGKGYY) contributes to the ATP binding site. Aspartate 152 and aspartate 188 together coordinate Mg(2+).

This sequence belongs to the 5-formyltetrahydrofolate cyclo-ligase family. Monomer. Requires Mg(2+) as cofactor.

It is found in the cytoplasm. The catalysed reaction is (6S)-5-formyl-5,6,7,8-tetrahydrofolate + ATP = (6R)-5,10-methenyltetrahydrofolate + ADP + phosphate. In terms of biological role, contributes to tetrahydrofolate metabolism. Helps regulate carbon flow through the folate-dependent one-carbon metabolic network that supplies carbon for the biosynthesis of purines, thymidine and amino acids. Catalyzes the irreversible conversion of 5-formyltetrahydrofolate (5-CHO-H(4)PteGlu) to yield 5,10-methenyltetrahydrofolate. The chain is Probable 5-formyltetrahydrofolate cyclo-ligase from Caenorhabditis elegans.